A 171-amino-acid chain; its full sequence is Orange carotenoid-binding domain-containing protein (171 aa).

An OCP N-terminal domain is found at 21–171 (GDAVASTITV…ADMGVDPLAD (151 aa)).

This sequence belongs to the orange carotenoid-binding protein family. It depends on 3'-hydroxyechinenone as a cofactor.

The protein localises to the cellular thylakoid membrane. Might act as a photo-protectant, protecting against damage induced by excess light via a process known as non-photochemical quenching (NPQ). The polypeptide is Orange carotenoid-binding domain-containing protein (Nostoc sp. (strain PCC 7120 / SAG 25.82 / UTEX 2576)).